A 663-amino-acid chain; its full sequence is UvrABC system protein B (663 aa).

Basic and acidic residues predominate over residues 1 to 10 (MIDKRDDKPF). Residues 1-23 (MIDKRDDKPFKLKSKYKPSGDQP) form a disordered region. Residues 31–271 (DNIEGGEKAQ…EQSIAKIQAE (241 aa)) enclose the Helicase ATP-binding domain. 44–51 (GATGTGKT) is a binding site for ATP. The Beta-hairpin signature appears at 97–120 (YYDYYQPEAYVPSSDTYIEKDSSV). Residues 435–601 (QIDDLLGEIN…TIKKDIRGLI (167 aa)) enclose the Helicase C-terminal domain. The UVR domain maps to 627–662 (KEAINALQKQMQEAAELLDFELAAQMRDLILELKLM).

The protein belongs to the UvrB family. As to quaternary structure, forms a heterotetramer with UvrA during the search for lesions. Interacts with UvrC in an incision complex.

Its subcellular location is the cytoplasm. The UvrABC repair system catalyzes the recognition and processing of DNA lesions. A damage recognition complex composed of 2 UvrA and 2 UvrB subunits scans DNA for abnormalities. Upon binding of the UvrA(2)B(2) complex to a putative damaged site, the DNA wraps around one UvrB monomer. DNA wrap is dependent on ATP binding by UvrB and probably causes local melting of the DNA helix, facilitating insertion of UvrB beta-hairpin between the DNA strands. Then UvrB probes one DNA strand for the presence of a lesion. If a lesion is found the UvrA subunits dissociate and the UvrB-DNA preincision complex is formed. This complex is subsequently bound by UvrC and the second UvrB is released. If no lesion is found, the DNA wraps around the other UvrB subunit that will check the other stand for damage. The sequence is that of UvrABC system protein B from Streptococcus pyogenes serotype M5 (strain Manfredo).